The following is a 165-amino-acid chain: Methylated-DNA--protein-cysteine methyltransferase (165 aa).

The Nucleophile; methyl group acceptor role is filled by C126.

This sequence belongs to the MGMT family.

Its subcellular location is the cytoplasm. It carries out the reaction a 6-O-methyl-2'-deoxyguanosine in DNA + L-cysteinyl-[protein] = S-methyl-L-cysteinyl-[protein] + a 2'-deoxyguanosine in DNA. It catalyses the reaction a 4-O-methyl-thymidine in DNA + L-cysteinyl-[protein] = a thymidine in DNA + S-methyl-L-cysteinyl-[protein]. Its function is as follows. Involved in the cellular defense against the biological effects of O6-methylguanine (O6-MeG) and O4-methylthymine (O4-MeT) in DNA. Repairs the methylated nucleobase in DNA by stoichiometrically transferring the methyl group to a cysteine residue in the enzyme. This is a suicide reaction: the enzyme is irreversibly inactivated. The chain is Methylated-DNA--protein-cysteine methyltransferase from Mycolicibacterium paratuberculosis (strain ATCC BAA-968 / K-10) (Mycobacterium paratuberculosis).